The primary structure comprises 349 residues: Guanine nucleotide-binding protein alpha-13 subunit (349 aa).

Residue Gly2 is the site of N-myristoyl glycine attachment. Cys3 is lipidated: S-palmitoyl cysteine. In terms of domain architecture, G-alpha spans 35–349; it reads SHIRLLLLGS…VFKDIMKRKR (315 aa). Residues 38 to 51 form a G1 motif region; it reads RLLLLGSAESGKTT. Residues 43 to 50, 177 to 183, 202 to 206, 271 to 274, and Ala327 contribute to the GTP site; these read GSAESGKT, IMAYVPT, DIGGQ, and NEID. A G2 motif region spans residues 175–183; it reads DLIMAYVPT. Residue Thr183 participates in Mg(2+) binding. The interval 198 to 207 is G3 motif; the sequence is FQLFDIGGQK. The interval 267-274 is G4 motif; that stretch reads YLFLNEID. The G5 motif stretch occupies residues 325 to 330; the sequence is CIAIDT.

Belongs to the G-alpha family. G proteins are composed of 3 units; alpha, beta and gamma. The alpha chain contains the guanine nucleotide binding site.

Guanine nucleotide-binding proteins (G proteins) are involved as modulators or transducers in various transmembrane signaling systems. The polypeptide is Guanine nucleotide-binding protein alpha-13 subunit (Caenorhabditis briggsae).